The primary structure comprises 359 residues: Alanine racemase, biosynthetic (359 aa).

Lys34 acts as the Proton acceptor; specific for D-alanine in catalysis. Position 34 is an N6-(pyridoxal phosphate)lysine (Lys34). Arg129 contacts substrate. Catalysis depends on Tyr255, which acts as the Proton acceptor; specific for L-alanine. Met303 provides a ligand contact to substrate.

Belongs to the alanine racemase family. Pyridoxal 5'-phosphate is required as a cofactor.

The catalysed reaction is L-alanine = D-alanine. Its pathway is amino-acid biosynthesis; D-alanine biosynthesis; D-alanine from L-alanine: step 1/1. It participates in cell wall biogenesis; peptidoglycan biosynthesis. Catalyzes the interconversion of L-alanine and D-alanine. Provides the D-alanine required for cell wall biosynthesis. This is Alanine racemase, biosynthetic (alr) from Salmonella typhi.